A 295-amino-acid polypeptide reads, in one-letter code: MRRLEGSMVAIVTPMKDGAVDLRALRDLTEWQLAEGTDGIVPCGTTGEGVTLTPAERADVIRTVIETVRGRALVIAGAGSNATHEAIESVKLAKTLGADAALVVTPYYNKPTQEGLFRHYQAIWEATRFPVVAYNVPSRTSVDLLPETVARLAKAGAIAGIKEATANMDRQVQLVEKVGKDAIAYLSGDDFTVLPYIACGGHGVISVIANVAPRAMKELVVAARSGDLAGALAKQAAMAELNRMMFVETNPGPVKAAVALLGRSGGELRLPLAPVSEASLAKVRDAMVRFGLKLA.

Thr-46 lines the pyruvate pocket. Tyr-134 (proton donor/acceptor) is an active-site residue. The active-site Schiff-base intermediate with substrate is Lys-162. Ile-205 is a pyruvate binding site.

Belongs to the DapA family. Homotetramer; dimer of dimers.

It is found in the cytoplasm. It catalyses the reaction L-aspartate 4-semialdehyde + pyruvate = (2S,4S)-4-hydroxy-2,3,4,5-tetrahydrodipicolinate + H2O + H(+). It functions in the pathway amino-acid biosynthesis; L-lysine biosynthesis via DAP pathway; (S)-tetrahydrodipicolinate from L-aspartate: step 3/4. In terms of biological role, catalyzes the condensation of (S)-aspartate-beta-semialdehyde [(S)-ASA] and pyruvate to 4-hydroxy-tetrahydrodipicolinate (HTPA). The protein is 4-hydroxy-tetrahydrodipicolinate synthase of Anaeromyxobacter dehalogenans (strain 2CP-1 / ATCC BAA-258).